We begin with the raw amino-acid sequence, 216 residues long: GTPase IMAP family member GIMD1 (216 aa).

The region spanning 5-216 (KMTINLALFG…ENCYQVLTFK (212 aa)) is the AIG1-type G domain. GTP contacts are provided by residues 14–22 (GMTQSGKSS), Ser-35, and 147–149 (HAE).

This sequence belongs to the TRAFAC class TrmE-Era-EngA-EngB-Septin-like GTPase superfamily. AIG1/Toc34/Toc159-like paraseptin GTPase family. IAN subfamily.

The protein is GTPase IMAP family member GIMD1 (GIMD1) of Bos taurus (Bovine).